Consider the following 99-residue polypeptide: uncharacterized protein (99 aa).

This is an uncharacterized protein from Saccharomyces cerevisiae (strain ATCC 204508 / S288c) (Baker's yeast).